Here is a 225-residue protein sequence, read N- to C-terminus: MTVQRRRRIIKRRRSSVGLALVAAISFLAGMTDAIGLMSIGDFVSFMSGNTTRASVALVQGDAAQGLLLIGGLVSFVLGNAAGVMISIRFRPQAALLFVSALLACAALQEGQPELRFVSLIFAMGAVNASVEQIEGLPVGLTYVTGALSRFGRGLGRWAMGVRNTQWIIQIVPWLGMFAGAIMGAVLVREAGDLALWVPSLAALLLTAAAFQIPRRWQSRFIQSR.

The next 6 helical transmembrane spans lie at 17 to 37, 66 to 86, 95 to 115, 117 to 137, 168 to 188, and 194 to 214; these read VGLALVAAISFLAGMTDAIGL, GLLLIGGLVSFVLGNAAGVMI, ALLFVSALLACAALQEGQPEL, FVSLIFAMGAVNASVEQIEGL, IIQIVPWLGMFAGAIMGAVLV, and LALWVPSLAALLLTAAAFQIP.

It belongs to the UPF0700 family.

It is found in the cell membrane. The protein is UPF0700 transmembrane protein RA0705 of Rhizobium meliloti (strain 1021) (Ensifer meliloti).